Consider the following 347-residue polypeptide: Quinolinate synthase (347 aa).

Iminosuccinate contacts are provided by histidine 47 and serine 68. Cysteine 113 contacts [4Fe-4S] cluster. Iminosuccinate-binding positions include 139-141 (YAN) and serine 156. [4Fe-4S] cluster is bound at residue cysteine 200. Iminosuccinate contacts are provided by residues 226-228 (HPE) and threonine 243. Cysteine 297 lines the [4Fe-4S] cluster pocket.

It belongs to the quinolinate synthase family. Type 1 subfamily. The cofactor is [4Fe-4S] cluster.

The protein resides in the cytoplasm. The enzyme catalyses iminosuccinate + dihydroxyacetone phosphate = quinolinate + phosphate + 2 H2O + H(+). It participates in cofactor biosynthesis; NAD(+) biosynthesis; quinolinate from iminoaspartate: step 1/1. Functionally, catalyzes the condensation of iminoaspartate with dihydroxyacetone phosphate to form quinolinate. This chain is Quinolinate synthase, found in Salmonella enteritidis PT4 (strain P125109).